A 401-amino-acid polypeptide reads, in one-letter code: Subtilisin-like protease 7 (401 aa).

The N-terminal stretch at 1–20 is a signal peptide; sequence MGFITKAIPLALAAASVING. A propeptide spanning residues 21-119 is cleaved from the precursor; it reads AEILETRAGV…IERDARVQIN (99 aa). The 83-residue stretch at 36 to 118 folds into the Inhibitor I9 domain; the sequence is KYIVVMNDGM…YIERDARVQI (83 aa). Residue Asn-58 is glycosylated (N-linked (GlcNAc...) asparagine). One can recognise a Peptidase S8 domain in the interval 129 to 401; the sequence is SWGLARVGSR…SKLINNGSGM (273 aa). Active-site charge relay system residues include Asp-161 and His-193. Residues Asn-223 and Asn-253 are each glycosylated (N-linked (GlcNAc...) asparagine). Ser-347 acts as the Charge relay system in catalysis. Residue Asn-397 is glycosylated (N-linked (GlcNAc...) asparagine).

The protein belongs to the peptidase S8 family.

Its subcellular location is the secreted. Secreted subtilisin-like serine protease with keratinolytic activity that contributes to pathogenicity. In Trichophyton tonsurans (Scalp ringworm fungus), this protein is Subtilisin-like protease 7 (SUB7).